The following is a 199-amino-acid chain: Large ribosomal subunit protein bL25 (199 aa).

It belongs to the bacterial ribosomal protein bL25 family. CTC subfamily. In terms of assembly, part of the 50S ribosomal subunit; part of the 5S rRNA/L5/L18/L25 subcomplex. Contacts the 5S rRNA. Binds to the 5S rRNA independently of L5 and L18.

In terms of biological role, this is one of the proteins that binds to the 5S RNA in the ribosome where it forms part of the central protuberance. This is Large ribosomal subunit protein bL25 from Herpetosiphon aurantiacus (strain ATCC 23779 / DSM 785 / 114-95).